A 158-amino-acid polypeptide reads, in one-letter code: MQGRSSAWLVKHELVHRSLGFDYQGIETLQIKPEDWYSIAVISYVYGYNYLRSQCAYDVAPGGLLASVYHLTKIEYGVDQPEEVCIKVFAPRRNPRIPSVFWIWKSADFQERESYDMLGISYENHPRLKRILMPESWIGWPLRKDYIAPNFYEIQDAY.

It belongs to the complex I 30 kDa subunit family. NDH is composed of at least 16 different subunits, 5 of which are encoded in the nucleus.

The protein resides in the plastid. It is found in the chloroplast thylakoid membrane. It catalyses the reaction a plastoquinone + NADH + (n+1) H(+)(in) = a plastoquinol + NAD(+) + n H(+)(out). The catalysed reaction is a plastoquinone + NADPH + (n+1) H(+)(in) = a plastoquinol + NADP(+) + n H(+)(out). Its function is as follows. NDH shuttles electrons from NAD(P)H:plastoquinone, via FMN and iron-sulfur (Fe-S) centers, to quinones in the photosynthetic chain and possibly in a chloroplast respiratory chain. The immediate electron acceptor for the enzyme in this species is believed to be plastoquinone. Couples the redox reaction to proton translocation, and thus conserves the redox energy in a proton gradient. This Liriodendron tulipifera (Tuliptree) protein is NAD(P)H-quinone oxidoreductase subunit J, chloroplastic.